A 131-amino-acid polypeptide reads, in one-letter code: Pancreatic polypeptide prohormone (131 aa).

A signal peptide spans 1–29 (MAAAHRCLFLLLLSTCVALLLQPPLGALG). At Tyr65 the chain carries Tyrosine amide.

The protein belongs to the NPY family.

The protein localises to the secreted. Its function is as follows. Hormone secreted by pancreatic cells that acts as a regulator of pancreatic and gastrointestinal functions probably by signaling through the G protein-coupled receptor NPY4R2. The sequence is that of Pancreatic polypeptide prohormone (PPY) from Bos taurus (Bovine).